The sequence spans 181 residues: Probable Brix domain-containing ribosomal biogenesis protein (181 aa).

The Brix domain maps to 5–181 (CKVIITTSRE…RIKKVVYRHV (177 aa)).

Its function is as follows. Probably involved in the biogenesis of the ribosome. In Pyrobaculum aerophilum (strain ATCC 51768 / DSM 7523 / JCM 9630 / CIP 104966 / NBRC 100827 / IM2), this protein is Probable Brix domain-containing ribosomal biogenesis protein.